The primary structure comprises 108 residues: Large ribosomal subunit protein uL23 (108 aa).

This sequence belongs to the universal ribosomal protein uL23 family. Part of the 50S ribosomal subunit. Contacts protein L29, and trigger factor when it is bound to the ribosome.

Functionally, one of the early assembly proteins it binds 23S rRNA. One of the proteins that surrounds the polypeptide exit tunnel on the outside of the ribosome. Forms the main docking site for trigger factor binding to the ribosome. This is Large ribosomal subunit protein uL23 from Leptothrix cholodnii (strain ATCC 51168 / LMG 8142 / SP-6) (Leptothrix discophora (strain SP-6)).